We begin with the raw amino-acid sequence, 847 residues long: MNKTTEYIDALLLSEREKAALPKTDIRAVHQALDAEHRTYSREDDSPQGSVKARLEHAWPDSLAKGQLIKDDEGRDQLQAMPKATRSSMFPDPWRTNPVGRFWDRLRGRDVTPRYVSRLTKEEQASEQKWRTVGTIRRYILLILTLAQTVVATWYMKTILPYQGWALINPMDMVGQDIWVSFMQLLPYMLQTGILILFAVLFCWVSAGFWTALMGFLQLLIGRDKYSISASTVGDEPLNPEHQTALIMPICNEDVSRVFAGLRATWESVKATGNAAHFDVYILSDSYNPDICVAEQKAWMELIAEVQGEGQIFYRRRRRRMKRKSGNIDDFCRRWGNQYSYMVVLDADSVMSGECLSGLVRLMEANPNAGIIQSSPKASGMDTLYARCQQFATRVYGPLFTAGLHFWQLGESHYWGHNAIIRVKPFIEHCALAPLPGEGSFAGSILSHDFVEAALMRRAGWGVWIAYDLPGSYEELPPNLLDELKRDRRWCHGNLMNFRLFLVKGMHPVHRAVFLTGVMSYLSAPLWFMFLALSTALQVVHALTEPQYFLQPRQLFPVWPQWRPELAIALFASTMVLLFLPKLLSIMLIWCKGTKEYGGFWRVTLSLLLEVLFSVLLAPVRMLFHTVFVVSAFLGWEVVWNSPQRDDDSTPWGEAFMRHGSQLLLGLVWAVGMAWLDLRFLFWLAPIVFSLILSPFVSVISSRSTVGLRTKRWKLFLIPEEYSPPQVLVDTDKYLEMNRRRILDDGFMHAVFNPSLNALATAMATARHRASKVLEIARDRHVEQALNETPEKLNRDRRLVLLSDPVTMARLHYRVWNAPERYSSWVNHYQSLVLNPQALQGRTSSAG.

Topologically, residues 1–138 (MNKTTEYIDA…KWRTVGTIRR (138 aa)) are cytoplasmic. A helical membrane pass occupies residues 139–156 (YILLILTLAQTVVATWYM). Over 157 to 193 (KTILPYQGWALINPMDMVGQDIWVSFMQLLPYMLQTG) the chain is Periplasmic. The chain crosses the membrane as a helical span at residues 194–216 (ILILFAVLFCWVSAGFWTALMGF). The Cytoplasmic segment spans residues 217–511 (LQLLIGRDKY…LVKGMHPVHR (295 aa)). Residues 512–534 (AVFLTGVMSYLSAPLWFMFLALS) traverse the membrane as a helical segment. Topologically, residues 535 to 567 (TALQVVHALTEPQYFLQPRQLFPVWPQWRPELA) are periplasmic. The chain crosses the membrane as a helical span at residues 568–590 (IALFASTMVLLFLPKLLSIMLIW). Residues 591 to 602 (CKGTKEYGGFWR) lie on the Cytoplasmic side of the membrane. The chain crosses the membrane as a helical span at residues 603–625 (VTLSLLLEVLFSVLLAPVRMLFH). The Periplasmic segment spans residues 626–679 (TVFVVSAFLGWEVVWNSPQRDDDSTPWGEAFMRHGSQLLLGLVWAVGMAWLDLR). The chain crosses the membrane as a helical span at residues 680–702 (FLFWLAPIVFSLILSPFVSVISS). The Cytoplasmic segment spans residues 703–847 (RSTVGLRTKR…ALQGRTSSAG (145 aa)).

It belongs to the glycosyltransferase 2 family. OpgH subfamily.

It localises to the cell inner membrane. Its pathway is glycan metabolism; osmoregulated periplasmic glucan (OPG) biosynthesis. Functionally, involved in the biosynthesis of osmoregulated periplasmic glucans (OPGs). In Salmonella typhi, this protein is Glucans biosynthesis glucosyltransferase H.